The chain runs to 547 residues: Glucose-6-phosphate isomerase (547 aa).

Residue glutamate 355 is the Proton donor of the active site. Residues histidine 386 and lysine 512 contribute to the active site.

It belongs to the GPI family.

Its subcellular location is the cytoplasm. The catalysed reaction is alpha-D-glucose 6-phosphate = beta-D-fructose 6-phosphate. Its pathway is carbohydrate biosynthesis; gluconeogenesis. It participates in carbohydrate degradation; glycolysis; D-glyceraldehyde 3-phosphate and glycerone phosphate from D-glucose: step 2/4. Its function is as follows. Catalyzes the reversible isomerization of glucose-6-phosphate to fructose-6-phosphate. The sequence is that of Glucose-6-phosphate isomerase from Corynebacterium diphtheriae (strain ATCC 700971 / NCTC 13129 / Biotype gravis).